Reading from the N-terminus, the 242-residue chain is Serine hydrolase cnsH (242 aa).

Active-site charge relay system residues include Ser-56, Asp-138, and His-216.

It belongs to the AB hydrolase 3 family.

The protein operates within alkaloid biosynthesis. Functionally, serine hydrolase; part of the gene cluster that mediates the biosynthesis of communesins, a prominent class of indole alkaloids with great potential as pharmaceuticals. Communesins are biosynthesized by the coupling of tryptamine and aurantioclavine, two building blocks derived from L-tryptophan. The L-tryptophan decarboxylase cnsB converts L-tryptophan to tryptamine, whereas the tryptophan dimethylallyltransferase cnsF converts L-tryptophan to 4-dimethylallyl tryptophan which is further transformed to aurantioclavine by the aurantioclavine synthase cnsA, probably aided by the catalase cnsD. The cytochrome P450 monooxygenase cnsC catalyzes the heterodimeric coupling between the two different indole moieties, tryptamine and aurantioclavine, to construct vicinal quaternary stereocenters and yield the heptacyclic communesin scaffold. The O-methyltransferase cnsE then methylates the communesin scaffold to produce communesin K, the simplest characterized communesin that contains the heptacyclic core. The dioxygenase cnsJ converts communesin K into communesin I. Acylation to introduce the hexadienyl group at position N16 of communesin I by the acyltransferase cnsK leads to the production of communesin B. The hexadienyl group is produced by the highly reducing polyketide synthase cnsI, before being hydrolytically removed from cnsI by the serine hydrolase cnsH, converted into hexadienyl-CoA by the CoA ligase cnsG, and then transferred to communesin I by cnsK. Surprisingly, cnsK may also be a promiscuous acyltransferase that can tolerate a range of acyl groups, including acetyl-, propionyl-, and butyryl-CoA, which lead to communesins A, G and H respectively. The roles of the alpha-ketoglutarate-dependent dioxygenases cnsM and cnsP have still to be determined. This Penicillium expansum (Blue mold rot fungus) protein is Serine hydrolase cnsH.